We begin with the raw amino-acid sequence, 100 residues long: Osteocalcin (100 aa).

A signal peptide spans Met1–Ala23. Positions Lys24–Arg51 are excised as a propeptide. The 47-residue stretch at Tyr52–Gly98 folds into the Gla domain. Positions 68, 72, 75, and 81 each coordinate Ca(2+). Residues Glu68, Glu72, and Glu75 each carry the 4-carboxyglutamate modification. Cysteines 74 and 80 form a disulfide.

This sequence belongs to the osteocalcin/matrix Gla protein family. In terms of processing, gamma-carboxyglutamate residues are formed by vitamin K dependent carboxylation by GGCX. These residues are essential for the binding of calcium. Decarboxylation promotes the hormone activity.

The protein resides in the secreted. In terms of biological role, the carboxylated form is one of the main organic components of the bone matrix, which constitutes 1-2% of the total bone protein: it acts as a negative regulator of bone formation and is required to limit bone formation without impairing bone resorption or mineralization. The carboxylated form binds strongly to apatite and calcium. Its function is as follows. The uncarboxylated form acts as a hormone secreted by osteoblasts, which regulates different cellular processes, such as energy metabolism, male fertility and brain development. Regulates of energy metabolism by acting as a hormone favoring pancreatic beta-cell proliferation, insulin secretion and sensitivity and energy expenditure. Uncarboxylated osteocalcin hormone also promotes testosterone production in the testes: acts as a ligand for G protein-coupled receptor GPRC6A at the surface of Leydig cells, initiating a signaling response that promotes the expression of enzymes required for testosterone synthesis in a CREB-dependent manner. Also acts as a regulator of brain development: osteocalcin hormone crosses the blood-brain barrier and acts as a ligand for GPR158 on neurons, initiating a signaling response that prevents neuronal apoptosis in the hippocampus, favors the synthesis of all monoamine neurotransmitters and inhibits that of gamma-aminobutyric acid (GABA). Osteocalcin also crosses the placenta during pregnancy and maternal osteocalcin is required for fetal brain development. This Pongo pygmaeus (Bornean orangutan) protein is Osteocalcin.